A 230-amino-acid chain; its full sequence is Dickkopf-like protein 1 (230 aa).

Positions 1–20 (MCRLRVLLLLLPLAFVSSSA) are cleaved as a signal peptide. Residues Asn31, Asn87, and Asn102 are each glycosylated (N-linked (GlcNAc...) asparagine).

In terms of assembly, interacts with SLXL1; Co-localize in seminiferous tubules. Interacts with SLY. Post-translationally, N-glycosylated during spermatogenesis. Not N-glycosylated in mature sperm. In terms of tissue distribution, testis-specific. Abundant in the seminiferous tubules where it is associated with developing spermatocytes. Expressed only in testis (at protein level). Not detectable on postnatal days 4 and 9 but after day 18 it gradually increased as the development of testes progressed. Expressed at high levels in testis and at weak levels in epididymis.

Its subcellular location is the secreted. The protein localises to the cytoplasmic vesicle. The protein resides in the secretory vesicle. It localises to the acrosome. In terms of biological role, involved in fertilization by facilitating sperm penetration of the zona pellucida. May promote spermatocyte apoptosis, thereby limiting sperm production. In adults, may reduce testosterone synthesis in Leydig cells. Is not essential either for development or fertility. The protein is Dickkopf-like protein 1 of Mus musculus (Mouse).